The primary structure comprises 155 residues: uncharacterized protein (155 aa).

Residues 1 to 30 (MTYNTNTSLSSYAGLSAFALSVFCILWGTA) form the signal peptide.

This is an uncharacterized protein from Treponema pallidum (strain Nichols).